The following is a 297-amino-acid chain: Mitochondrial nicotinamide adenine dinucleotide transporter SLC25A52 (297 aa).

Solcar repeat units lie at residues 28 to 108, 116 to 200, and 209 to 296; these read VGEM…LSCL, PEFA…IKEH, and AHLV…LLKF. 6 consecutive transmembrane segments (helical) span residues 34-51, 85-105, 118-138, 179-199, 215-235, and 268-289; these read YLCGCCAAFNNVAITYPI, LPPLMQKTTTLALMFGLYEDL, FATHGVAAVLAGTAEAIFTPL, ILFRNGLSNVLFFGLRGPIKE, FIGGGLLGAMLGFLCFPINVV, and LFRGAHLNYHRSLISWGIINAT.

This sequence belongs to the mitochondrial carrier (TC 2.A.29) family.

The protein resides in the mitochondrion inner membrane. It carries out the reaction NAD(+)(in) = NAD(+)(out). Its function is as follows. Mitochondrial membrane carrier protein that mediates the import of NAD(+) into mitochondria. Compared to SLC25A51, SLC25A52-mediated transport is not essential for the import of NAD(+) in mitochondria. The transport mechanism, uniport or antiport, its electrogenicity and substrate selectivity, remain to be elucidated. The polypeptide is Mitochondrial nicotinamide adenine dinucleotide transporter SLC25A52 (Homo sapiens (Human)).